The chain runs to 216 residues: Pyridoxine/pyridoxamine 5'-phosphate oxidase (216 aa).

FMN contacts are provided by residues 63 to 68 (RMVLMK), 78 to 79 (YS), lysine 85, and glutamine 107. Lysine 68 contacts substrate. Residues tyrosine 125 and arginine 129 each coordinate substrate. FMN is bound by residues 142-143 (QS) and tryptophan 187. A substrate-binding site is contributed by 193–195 (RLH). Arginine 197 is an FMN binding site.

Belongs to the pyridoxamine 5'-phosphate oxidase family. Homodimer. FMN is required as a cofactor.

It carries out the reaction pyridoxamine 5'-phosphate + O2 + H2O = pyridoxal 5'-phosphate + H2O2 + NH4(+). The catalysed reaction is pyridoxine 5'-phosphate + O2 = pyridoxal 5'-phosphate + H2O2. It functions in the pathway cofactor metabolism; pyridoxal 5'-phosphate salvage; pyridoxal 5'-phosphate from pyridoxamine 5'-phosphate: step 1/1. The protein operates within cofactor metabolism; pyridoxal 5'-phosphate salvage; pyridoxal 5'-phosphate from pyridoxine 5'-phosphate: step 1/1. Catalyzes the oxidation of either pyridoxine 5'-phosphate (PNP) or pyridoxamine 5'-phosphate (PMP) into pyridoxal 5'-phosphate (PLP). The chain is Pyridoxine/pyridoxamine 5'-phosphate oxidase from Bradyrhizobium sp. (strain ORS 278).